The following is a 706-amino-acid chain: D-(-)-3-hydroxybutyrate oligomer hydrolase (706 aa).

The N-terminal stretch at 1–32 (MTTTSKNCLTLTSIAAAVAAVLVLSACGGGSA) is a signal peptide. Serine 311 serves as the catalytic Charge relay system.

It belongs to the D-(-)-3-hydroxybutyrate oligomer hydrolase family.

The protein resides in the secreted. The catalysed reaction is (3R)-hydroxybutanoate dimer + H2O = 2 (R)-3-hydroxybutanoate + H(+). Its pathway is lipid metabolism; butanoate metabolism. Its function is as follows. Participates in the degradation of poly-3-hydroxybutyrate (PHB). It works downstream of poly(3-hydroxybutyrate) depolymerase, hydrolyzing D(-)-3-hydroxybutyrate oligomers of various length (3HB-oligomers) into 3HB-monomers. The protein is D-(-)-3-hydroxybutyrate oligomer hydrolase of Polaromonas sp. (strain JS666 / ATCC BAA-500).